The sequence spans 264 residues: CD320 antigen (264 aa).

The N-terminal stretch at 1–28 (MARCGAGRAAALGLVLRLLLGLRTGPEA) is a signal peptide. Residues 50 to 87 (SCPTDTFKCLTSGYCVPLSWRCDGDRDCSDGSDEEECR) enclose the LDL-receptor class A 1 domain. 3 cysteine pairs are disulfide-bonded: C51–C64, C58–C77, and C71–C86. Positions 69, 72, 74, 76, 82, and 83 each coordinate Ca(2+). The N-linked (GlcNAc...) asparagine glycan is linked to N122. An LDL-receptor class A 2 domain is found at 127–164 (PCQEGELRCILDDVCIPHTWRCDGHPDCPDSSDELSCD). 3 disulfides stabilise this stretch: C128-C141, C135-C154, and C148-C163. Ca(2+) is bound by residues W146, D149, H151, D153, D159, and E160. N-linked (GlcNAc...) asparagine glycosylation occurs at N195. A helical membrane pass occupies residues 213-233 (VIAAAGVLSAILVSATILILL).

Interacts (via LDL-receptor class A domains) with TCN2.

Its subcellular location is the cell membrane. Functionally, receptor for transcobalamin saturated with cobalamin (TCbl). Plays an important role in cobalamin uptake. Plasma membrane protein that is expressed on follicular dendritic cells (FDC) and mediates interaction with germinal center B cells. Functions as a costimulator to promote B cell responses to antigenic stimuli; promotes B cell differentiation and proliferation. Germinal center-B (GC-B) cells differentiate into memory B-cells and plasma cells (PC) through interaction with T-cells and follicular dendritic cells (FDC). CD320 augments the proliferation of PC precursors generated by IL-10. The protein is CD320 antigen (Cd320) of Rattus norvegicus (Rat).